Here is a 222-residue protein sequence, read N- to C-terminus: Pyridoxal phosphate homeostasis protein (222 aa).

Position 35 is an N6-(pyridoxal phosphate)lysine (Lys35).

The protein belongs to the pyridoxal phosphate-binding protein YggS/PROSC family.

Pyridoxal 5'-phosphate (PLP)-binding protein, which is involved in PLP homeostasis. The protein is Pyridoxal phosphate homeostasis protein of Helicobacter pylori (strain J99 / ATCC 700824) (Campylobacter pylori J99).